A 443-amino-acid polypeptide reads, in one-letter code: Xaa-Pro dipeptidase (443 aa).

Positions 246, 257, 339, 384, and 423 each coordinate Mn(2+).

It belongs to the peptidase M24B family. Bacterial-type prolidase subfamily. Mn(2+) serves as cofactor.

The catalysed reaction is Xaa-L-Pro dipeptide + H2O = an L-alpha-amino acid + L-proline. In terms of biological role, splits dipeptides with a prolyl residue in the C-terminal position. The sequence is that of Xaa-Pro dipeptidase from Klebsiella pneumoniae (strain 342).